The primary structure comprises 617 residues: MPKYRSFTTTQGRNMSGARSLWRATGMTEKDFTKPIIAVVNSFSQFVPGHIHLQEVGKLICGEIQKSGGVAKEFNTIAIDDGIAMGHSGMLYSLPSRELIADSIEYVVNAHCADAMICISNCDKITPGMLMASLRLNIPSVFISGGPMEAGKIQKNNKTIKIDLVDAIINGGKSHISDDFIKDIEASACPTCGSCSGMFTANSMNCLTEAIGLALPGNGTLLATHIDRKNLFIKSAQIIVKITEDYYKKNNTNVLPRNIANKESFENAMMLDIAMGGSTNTILHLLAAAQEAKVDFKMSNINKLSKKIPHICKVAPSTSLYHVEDVHRAGGVMGILGELNRFNLLHKNTRNILQLNLEETLDEYDIFSTNNPDVINMFQAGPGGIRTTKAYSQNFRWTRLDYDRKNGCIRSCKHAYSQDGGLAILYGNLAKNGCIIKTAGIDAKNYIFSGVAKVYESQEEAASSILNGEIISGDIIVIRYEGPKGGPGMQEMLYPTTYLKSMNLDKTCALITDGRFSGGTSGISIGHISPEAANKGIIALVKNGDIININIPERTIHLNITEKELSHRILQEESKGPLSYKPHSRKRYISSALKAYAFFSTSADQGAVRDYKKISNI.

Residue Asp81 coordinates Mg(2+). Cys122 contributes to the [2Fe-2S] cluster binding site. Mg(2+) contacts are provided by Asp123 and Lys124. Lys124 carries the N6-carboxylysine modification. Residue Cys195 participates in [2Fe-2S] cluster binding. A Mg(2+)-binding site is contributed by Glu491. Ser517 (proton acceptor) is an active-site residue.

This sequence belongs to the IlvD/Edd family. Homodimer. Requires [2Fe-2S] cluster as cofactor. Mg(2+) is required as a cofactor.

The catalysed reaction is (2R)-2,3-dihydroxy-3-methylbutanoate = 3-methyl-2-oxobutanoate + H2O. The enzyme catalyses (2R,3R)-2,3-dihydroxy-3-methylpentanoate = (S)-3-methyl-2-oxopentanoate + H2O. Its pathway is amino-acid biosynthesis; L-isoleucine biosynthesis; L-isoleucine from 2-oxobutanoate: step 3/4. It participates in amino-acid biosynthesis; L-valine biosynthesis; L-valine from pyruvate: step 3/4. Functionally, functions in the biosynthesis of branched-chain amino acids. Catalyzes the dehydration of (2R,3R)-2,3-dihydroxy-3-methylpentanoate (2,3-dihydroxy-3-methylvalerate) into 2-oxo-3-methylpentanoate (2-oxo-3-methylvalerate) and of (2R)-2,3-dihydroxy-3-methylbutanoate (2,3-dihydroxyisovalerate) into 2-oxo-3-methylbutanoate (2-oxoisovalerate), the penultimate precursor to L-isoleucine and L-valine, respectively. In Buchnera aphidicola subsp. Acyrthosiphon pisum (strain 5A), this protein is Dihydroxy-acid dehydratase.